Reading from the N-terminus, the 1183-residue chain is Putative ATP-dependent RNA helicase PB1A10.06c (1183 aa).

2 disordered regions span residues 1 to 92 (MGRL…KKRL) and 165 to 315 (ETTT…RASR). The span at 60-81 (VPKEERQKRKQELKDQLLKENE) shows a compositional bias: basic and acidic residues. Low complexity-rich tracts occupy residues 165 to 176 (ETTTTKSSTAET) and 184 to 196 (TRSG…STGT). Over residues 224 to 251 (EDPEYDSAEEDYLSTDSEEFSEDSDNSS) the composition is skewed to acidic residues. The segment covering 252 to 270 (EENKDTNEPSTKDAEKTVP) has biased composition (basic and acidic residues). Residues 292–308 (ENEDFDLETSEDDSSDD) are compositionally biased toward acidic residues. The Helicase ATP-binding domain occupies 408–585 (MEQIFANDVV…KLLFSVPPPI (178 aa)). 421 to 428 (GATGSGKT) serves as a coordination point for ATP. Positions 522 to 525 (DEAH) match the DEAH box motif. The region spanning 611–831 (AFDKVCLIHK…SIVLQMKNMN (221 aa)) is the Helicase C-terminal domain. Acidic residues predominate over residues 673–683 (EDLQSETEDID). Residues 673-696 (EDLQSETEDIDQVPTSSSSSVTYD) are disordered.

Belongs to the DEAD box helicase family. DEAH subfamily.

It is found in the nucleus. It localises to the nucleolus. The enzyme catalyses ATP + H2O = ADP + phosphate + H(+). This chain is Putative ATP-dependent RNA helicase PB1A10.06c, found in Schizosaccharomyces pombe (strain 972 / ATCC 24843) (Fission yeast).